The chain runs to 320 residues: Malate dehydrogenase (320 aa).

NAD(+) contacts are provided by residues 10–15 and D34; that span reads GSGMIG. 2 residues coordinate substrate: R83 and R89. NAD(+) contacts are provided by residues N96 and 119-121; that span reads ITN. 2 residues coordinate substrate: N121 and R152. H176 serves as the catalytic Proton acceptor.

The protein belongs to the LDH/MDH superfamily. MDH type 3 family.

The catalysed reaction is (S)-malate + NAD(+) = oxaloacetate + NADH + H(+). In terms of biological role, catalyzes the reversible oxidation of malate to oxaloacetate. The protein is Malate dehydrogenase of Bartonella tribocorum (strain CIP 105476 / IBS 506).